The following is a 676-amino-acid chain: Probable ERAD-associated E3 ubiquitin-protein ligase ASI1 (676 aa).

At 1–78 (MSTNILQHVK…TLQLAKVGIR (78 aa)) the chain is on the perinuclear space side. N-linked (GlcNAc...) asparagine glycans are attached at residues Asn-24, Asn-34, Asn-46, and Asn-66. Residues 79-99 (MFFSYSVSKYAVLCFSTAIIL) form a helical membrane-spanning segment. At 100–126 (NRLTVMSSLRSNSTNIRLPLWSKTLLH) the chain is on the nuclear side. Residues 127–147 (LVATLSLVKALLQILSQFGLM) traverse the membrane as a helical segment. The Perinuclear space portion of the chain corresponds to 148–156 (HELHVSDTD). Residues 157 to 177 (FYALSVYLFVALSDCIEIFIS) form a helical membrane-spanning segment. At 178–181 (STTN) the chain is on the nuclear side. Residues 182 to 202 (VPSLICSDFSIWGLSLNLYII) form a helical membrane-spanning segment. Residues 203–277 (SKMPAGQQHI…NICLIHNYFP (75 aa)) are Perinuclear space-facing. Residues 278 to 298 (GFFYISTILLASIGIFLKALF) traverse the membrane as a helical segment. At 299-676 (TSNPFRSLYS…VKGYSKLNIV (378 aa)) the chain is on the nuclear side. The RING-type; atypical zinc finger occupies 624 to 664 (CLICKVNKRNIVTWPCRCLALCDDCRISLGYKGFATCVSCD).

In terms of assembly, component of the Asi complex, which contains ASI1, ASI2 and ASI3. Interacts directly with ASI1.

It localises to the nucleus inner membrane. The catalysed reaction is S-ubiquitinyl-[E2 ubiquitin-conjugating enzyme]-L-cysteine + [acceptor protein]-L-lysine = [E2 ubiquitin-conjugating enzyme]-L-cysteine + N(6)-ubiquitinyl-[acceptor protein]-L-lysine.. Functionally, part of the nuclear inner membrane (INM)-specific branch of the ER-associated degradation (ERAD) pathway, required for the elimination of misfolded proteins in the INM, a specialized ER subdomain. Required for ERG11 degradation. Negative regulator of SPS-sensor signaling. Together with ASI2 and ASI3, prevents the unprocessed precursor forms of STP1 and STP2 that escape cytoplasmic anchoring from inducing SPS-sensor-regulated genes in the absence of inducing signals. Controls amino acid permease (AAP) gene expression in response to amino acid availability, a process mediated by the transcription factors STP1 and STP1. The chain is Probable ERAD-associated E3 ubiquitin-protein ligase ASI1 (ASI3) from Saccharomyces cerevisiae (strain ATCC 204508 / S288c) (Baker's yeast).